Consider the following 392-residue polypeptide: Probable protein phosphatase 2C 22 (392 aa).

Positions 1–26 are disordered; sequence MEETRGISDPENGSSSYGGKPPNPLS. In terms of domain architecture, PPM-type phosphatase spans 89-356; sequence RSGAWSDIGS…DNVTAVVVCL (268 aa). Residues Asp133, Gly134, Asp304, and Asp347 each coordinate Mn(2+).

It belongs to the PP2C family. Mg(2+) is required as a cofactor. The cofactor is Mn(2+).

It carries out the reaction O-phospho-L-seryl-[protein] + H2O = L-seryl-[protein] + phosphate. It catalyses the reaction O-phospho-L-threonyl-[protein] + H2O = L-threonyl-[protein] + phosphate. The polypeptide is Probable protein phosphatase 2C 22 (Arabidopsis thaliana (Mouse-ear cress)).